The primary structure comprises 444 residues: Adenylosuccinate synthetase (444 aa).

GTP-binding positions include 12–18 (GDEGKGK) and 40–42 (GHT). The active-site Proton acceptor is D13. Mg(2+) contacts are provided by D13 and G40. Residues 13–16 (DEGK), 38–41 (NAGH), T128, R142, Q223, T238, and R302 each bind IMP. The active-site Proton donor is H41. 298-304 (TTTGRRR) lines the substrate pocket. Residues R304, 330-332 (KLD), and 412-414 (SLG) each bind GTP.

This sequence belongs to the adenylosuccinate synthetase family. In terms of assembly, homodimer. It depends on Mg(2+) as a cofactor.

The protein localises to the cytoplasm. It carries out the reaction IMP + L-aspartate + GTP = N(6)-(1,2-dicarboxyethyl)-AMP + GDP + phosphate + 2 H(+). It functions in the pathway purine metabolism; AMP biosynthesis via de novo pathway; AMP from IMP: step 1/2. Plays an important role in the de novo pathway of purine nucleotide biosynthesis. Catalyzes the first committed step in the biosynthesis of AMP from IMP. The protein is Adenylosuccinate synthetase of Synechococcus sp. (strain ATCC 27144 / PCC 6301 / SAUG 1402/1) (Anacystis nidulans).